The chain runs to 237 residues: Uridylate kinase (237 aa).

10–13 (KLSG) lines the ATP pocket. Gly51 is a binding site for UMP. ATP is bound by residues Gly52 and Arg56. Residues Asp71 and 133–140 (TGNPCFTT) contribute to the UMP site. ATP contacts are provided by Thr160, Tyr166, and Asp169.

The protein belongs to the UMP kinase family. In terms of assembly, homohexamer.

Its subcellular location is the cytoplasm. It catalyses the reaction UMP + ATP = UDP + ADP. Its pathway is pyrimidine metabolism; CTP biosynthesis via de novo pathway; UDP from UMP (UMPK route): step 1/1. With respect to regulation, inhibited by UTP. Catalyzes the reversible phosphorylation of UMP to UDP. This is Uridylate kinase from Vesicomyosocius okutanii subsp. Calyptogena okutanii (strain HA).